Consider the following 180-residue polypeptide: Oligoribonuclease (180 aa).

One can recognise an Exonuclease domain in the interval 7–170 (LIWIDLEMTG…DDIRESIAEL (164 aa)). Tyrosine 128 is a catalytic residue.

It belongs to the oligoribonuclease family.

The protein resides in the cytoplasm. Functionally, 3'-to-5' exoribonuclease specific for small oligoribonucleotides. The chain is Oligoribonuclease from Pseudomonas aeruginosa (strain UCBPP-PA14).